A 78-amino-acid chain; its full sequence is Mu-conotoxin BuIIIB (78 aa).

A signal peptide spans 1–22 (MMSKLGVLLTICLLLFPLFALP). The propeptide occupies 23 to 51 (QDGDQPADRPAERMQDDISSEQNPLLEKR). Residues 26–46 (DQPADRPAERMQDDISSEQNP) form a disordered region. Residues 28–38 (PADRPAERMQD) are compositionally biased toward basic and acidic residues. 3 disulfide bridges follow: Cys56-Cys68, Cys57-Cys74, and Cys64-Cys75. Cys75 carries the cysteine amide modification.

It belongs to the conotoxin M superfamily. In terms of tissue distribution, expressed by the venom duct.

Its subcellular location is the secreted. In terms of biological role, mu-conotoxins block voltage-gated sodium channels (Nav). This synthetic toxin potently blocks rNav1.4/SCN4A (Kd=0.34-3.6 nM), rNav1.2/SCN2A (Kd=13 nM), rNav1.3/SCN3A (Kd=200 nM), rNav1.1/SCN1A (Kd=360 nM), mNav1.6/SCN8A (IC(50)=1.8 uM), rNav1.5/SCN5A (IC(50)=9 uM), rNav1.6/SCN8A (IC(50)&gt;30 uM). It is noteworthy that the toxin is 50-fold more potent on mouse Nav1.6 than on rat Nav1.6. The block of SCN4A is very slowly reversible. The polypeptide is Mu-conotoxin BuIIIB (Conus bullatus (Bubble cone)).